The sequence spans 92 residues: Probable K(+)/H(+) antiporter subunit F (92 aa).

The next 3 helical transmembrane spans lie at 4–24 (AVVW…AFAL), 36–56 (RILG…TFGI), and 62–82 (VYFE…IALA).

This sequence belongs to the CPA3 antiporters (TC 2.A.63) subunit F family. In terms of assembly, may form a hetero-oligomeric complex that consists of six subunits: PhaAB, PhaC, PhaD, PhaE, PhaF and PhaG.

Its subcellular location is the cell membrane. In terms of biological role, part of a K(+) efflux system which is required for the adaptation of R.meliloti to alkaline pH as well as for the infection process during symbiotic nodule development. This is Probable K(+)/H(+) antiporter subunit F (phaF) from Rhizobium meliloti (strain 1021) (Ensifer meliloti).